A 712-amino-acid polypeptide reads, in one-letter code: Ribosomal RNA large subunit methyltransferase K/L (712 aa).

Positions 46–157 constitute a THUMP domain; that stretch reads GAYQALLHSR…RENMVVSLDL (112 aa).

It belongs to the methyltransferase superfamily. RlmKL family.

Its subcellular location is the cytoplasm. The catalysed reaction is guanosine(2445) in 23S rRNA + S-adenosyl-L-methionine = N(2)-methylguanosine(2445) in 23S rRNA + S-adenosyl-L-homocysteine + H(+). It catalyses the reaction guanosine(2069) in 23S rRNA + S-adenosyl-L-methionine = N(2)-methylguanosine(2069) in 23S rRNA + S-adenosyl-L-homocysteine + H(+). Its function is as follows. Specifically methylates the guanine in position 2445 (m2G2445) and the guanine in position 2069 (m7G2069) of 23S rRNA. This chain is Ribosomal RNA large subunit methyltransferase K/L, found in Actinobacillus pleuropneumoniae serotype 5b (strain L20).